Consider the following 68-residue polypeptide: MGDQPCASGRSTLPPGNAREAKPPKKRCLLAPRWDYPEGTPNGGSTTLPSAPPPASAGLKSHPPPPEK.

The segment at 1-68 (MGDQPCASGR…LKSHPPPPEK (68 aa)) is disordered.

As to quaternary structure, interacts with mRNA decapping proteins DCP1A, DCP2 and EDC4.

The protein resides in the cytoplasm. It is found in the P-body. Functionally, promotes dispersal of P-body components and is likely to play a role in the mRNA decapping process. The sequence is that of Negative regulator of P-body association from Homo sapiens (Human).